The following is a 333-amino-acid chain: Tryptophan--tRNA ligase (333 aa).

Residues glutamine 11–serine 13 and glycine 19–asparagine 20 each bind ATP. Residues proline 12 to asparagine 20 carry the 'HIGH' region motif. Aspartate 135 is an L-tryptophan binding site. ATP is bound by residues glycine 147–aspartate 149, valine 186, and lysine 195–serine 199. The short motif at lysine 195–serine 199 is the 'KMSKS' region element.

The protein belongs to the class-I aminoacyl-tRNA synthetase family. In terms of assembly, homodimer.

Its subcellular location is the cytoplasm. The catalysed reaction is tRNA(Trp) + L-tryptophan + ATP = L-tryptophyl-tRNA(Trp) + AMP + diphosphate + H(+). Functionally, catalyzes the attachment of tryptophan to tRNA(Trp). The sequence is that of Tryptophan--tRNA ligase from Pasteurella multocida (strain Pm70).